The sequence spans 401 residues: MSLRQLLLRLSGYLGASGPPSRHWWYFRSLDSISSAGSWRGRSSRSPAHWNQVVSEAEKIVGYPASFMSLRCLLSDELSNIAMQVRKLVGTGHPLLTTARALVHDSRHNLQLRGLVVLLISKAAGPSTRNAACQNYDMVSGVYSCQRSLAEITELIHTALLVHRGIVNLSELQSSDGPLKDMQFGNKIAILSGDFLLANACNGLALLQNTKVVELLSSALMDLVHGVYQENSASTKENSIPDDIGISTWKEQTFLSHCALLAKSCQAAMELAKHDAAVQDMAFQYGKHMAMSHKINADLQPFIKDKASDSKTFNLNSAPVVLHQEFLGRDLWIKQIGEAQEKGSLNYSKLRETIKAGKGVTSAIDLCRYHGNKALEALESFPPSEARSALENIVFAVTRFS.

Belongs to the FPP/GGPP synthase family. As to quaternary structure, heterotetramer composed of 2 PDSS1/DPS1 and 2 PDSS2/DLP1 subunits.

The protein localises to the mitochondrion. The enzyme catalyses 7 isopentenyl diphosphate + (2E,6E)-farnesyl diphosphate = all-trans-decaprenyl diphosphate + 7 diphosphate. The catalysed reaction is 6 isopentenyl diphosphate + (2E,6E)-farnesyl diphosphate = all-trans-nonaprenyl diphosphate + 6 diphosphate. The protein operates within cofactor biosynthesis; ubiquinone biosynthesis. Heterotetrameric enzyme that catalyzes the condensation of farnesyl diphosphate (FPP), which acts as a primer, and isopentenyl diphosphate (IPP) to produce prenyl diphosphates of varying chain lengths and participates in the determination of the side chain of ubiquinone. Supplies nona and decaprenyl diphosphate, the precursors for the side chain of the isoprenoid quinones ubiquinone-9 (Q9) and ubiquinone-10 (Q10) respectively. The enzyme adds isopentenyl diphosphate molecules sequentially to farnesyl diphosphate with trans stereochemistry. May play a role during cerebellar development. May regulate mitochondrial respiratory chain function. The protein is All trans-polyprenyl-diphosphate synthase PDSS2 of Mus musculus (Mouse).